The following is a 356-amino-acid chain: Homoserine O-acetyltransferase (356 aa).

In terms of domain architecture, AB hydrolase-1 spans 50–335 (NVILVCHALT…DEPYGHDAFL (286 aa)). The active-site Nucleophile is the Ser146. Residue Arg215 participates in substrate binding. Residues Asp302 and His331 contribute to the active site. Residue Asp332 coordinates substrate.

Belongs to the AB hydrolase superfamily. MetX family. Homodimer.

The protein localises to the cytoplasm. It catalyses the reaction L-homoserine + acetyl-CoA = O-acetyl-L-homoserine + CoA. It participates in amino-acid biosynthesis; L-methionine biosynthesis via de novo pathway; O-acetyl-L-homoserine from L-homoserine: step 1/1. In terms of biological role, transfers an acetyl group from acetyl-CoA to L-homoserine, forming acetyl-L-homoserine. This Chlorobaculum tepidum (strain ATCC 49652 / DSM 12025 / NBRC 103806 / TLS) (Chlorobium tepidum) protein is Homoserine O-acetyltransferase.